The primary structure comprises 358 residues: Putative spore germination protein YfkT (358 aa).

The next 10 membrane-spanning stretches (helical) occupy residues 10–30, 36–56, 81–101, 107–127, 143–163, 179–199, 210–230, 262–282, 297–317, and 326–346; these read LFFGALYTLAVGLKHAPILMI, NAWHSYILGVVIVIPALWLMH, IIILLFSLYFLLINAHDIRFF, ILFLPRTPMAVLGGVIIFVAI, IFLFPFGILVLFLPFTLATQI, LQSGYYAFGTMGELIILPLLF, IFAILLGALLLAVMLFSSISV, IIAAFWIPVIMVKIAGSLYIV, AMYTPTGMFSVVCGFWFFLNT, and IKPIINVVISLLLPLLIYLII.

This sequence belongs to the amino acid-polyamine-organocation (APC) superfamily. Spore germination protein (SGP) (TC 2.A.3.9) family.

The protein resides in the cell membrane. May be involved in spore germination. This is Putative spore germination protein YfkT (yfkT) from Bacillus subtilis (strain 168).